Consider the following 323-residue polypeptide: Ankyrin repeat and SOCS box protein 11 (323 aa).

ANK repeat units lie at residues 64 to 93, 97 to 126, 130 to 159, 162 to 191, 195 to 224, and 227 to 256; these read ADRSPLHEAAAQGRLLALKTLIAQGVNVNL, NRVSSLHEACLGGHVACAKALLENGAHVNG, HGATPLFNACCSGSAACVNVLLEFGAKAQF, HLASPIHEAVKRGHRECMEILLANNVNIDH, QLGTPLYVACTYQRVDCVKKLLELGASVDH, and WLDTPLHAAARQSNVEVIHLLTDYGANLKR. The region spanning 274-323 is the SOCS box domain; sequence VEQALLLCEGPPALSQLCRLCVRKCLGRACHQAIHKLHLPEPLERFLLYQ.

It belongs to the ankyrin SOCS box (ASB) family. Substrate-recognition component of the ECS(ASB11) complex, composed of ASB11, CUL5, ELOB, ELOC and RNF7/RBX2.

It is found in the endoplasmic reticulum. It functions in the pathway protein modification; protein ubiquitination. Substrate-recognition component of a cullin-5-RING E3 ubiquitin-protein ligase complex (ECS complex, also named CRL5 complex), which mediates the ubiquitination and subsequent proteasomal degradation of target proteins, such as BIK, DIRAS2 and RPN1. The ECS(ASB11) complex acts as a regulator of the endoplasmic reticulum unfolded protein response by mediating ubiquitination and degradation of BIK. This chain is Ankyrin repeat and SOCS box protein 11 (ASB11), found in Pongo abelii (Sumatran orangutan).